Reading from the N-terminus, the 428-residue chain is C4-dicarboxylate transport protein (428 aa).

The next 8 membrane-spanning stretches (helical) occupy residues 8-28 (SLYF…HFYP), 44-64 (LIKM…IAGM), 76-96 (VALL…LIIV), 142-162 (IGAF…LFGF), 184-204 (VIFG…FGAM), 222-242 (LIIC…GSIA), 326-346 (IVHQ…AAGV), and 352-372 (IVLA…LALI).

This sequence belongs to the dicarboxylate/amino acid:cation symporter (DAACS) (TC 2.A.23) family.

The protein resides in the cell inner membrane. Its function is as follows. Responsible for the transport of dicarboxylates such as succinate, fumarate, and malate from the periplasm across the membrane. This Escherichia coli O127:H6 (strain E2348/69 / EPEC) protein is C4-dicarboxylate transport protein.